Here is a 399-residue protein sequence, read N- to C-terminus: Tryptophan synthase beta chain (399 aa).

Lys-92 is modified (N6-(pyridoxal phosphate)lysine).

It belongs to the TrpB family. As to quaternary structure, tetramer of two alpha and two beta chains. It depends on pyridoxal 5'-phosphate as a cofactor.

It carries out the reaction (1S,2R)-1-C-(indol-3-yl)glycerol 3-phosphate + L-serine = D-glyceraldehyde 3-phosphate + L-tryptophan + H2O. It functions in the pathway amino-acid biosynthesis; L-tryptophan biosynthesis; L-tryptophan from chorismate: step 5/5. The beta subunit is responsible for the synthesis of L-tryptophan from indole and L-serine. This Bordetella petrii (strain ATCC BAA-461 / DSM 12804 / CCUG 43448) protein is Tryptophan synthase beta chain.